Reading from the N-terminus, the 438-residue chain is MSEQRIIRPTPISGFPEWTPRIRSVELRWLDHIRRGFERYGFSSVETPSVEVLDVLLSKGETSQEIYTLQRLQADADDSSDARLGLHFDLTVPFARYVAQHFNDLVFPFKRYQIQRVWRGERPQEGRFREFTQCDIDVINVDRIPLHFDAELPRIVHEVLTGLDIPAWTLNINNRKVLQGFYEGLGITDPLAVIRAVDKLHKIGADAVREILIDQAGLSSDQAAACLELAEIRGSDTTVVDAVAKLGVSHPTLTAGLDELGEVLDELSDLPSGSVVADLSIARGLDYYTGTVYEATFNDDPGYGSICAGGRYENLAGQFIRRSLPGVGISIGLTRIFAKLVSEGRITGGRFCPTDVLVVLPSDERRSAALAVAAQLRERGFNTEVYHQAAKIGKQIQYAVKKDIPFVWFPPFDDGRPHEVKNLATGEQVEADPASWNG.

Belongs to the class-II aminoacyl-tRNA synthetase family. Homodimer.

It is found in the cytoplasm. It carries out the reaction tRNA(His) + L-histidine + ATP = L-histidyl-tRNA(His) + AMP + diphosphate + H(+). This is Histidine--tRNA ligase (hisS) from Thermobifida fusca (strain YX).